We begin with the raw amino-acid sequence, 353 residues long: Fe(3+) ions import ATP-binding protein FbpC (353 aa).

An ABC transporter domain is found at 9–239 (VTFENVTKKF…PASAFIADFM (231 aa)). 41 to 48 (GPSGCGKT) lines the ATP pocket.

Belongs to the ABC transporter superfamily. Fe(3+) ion importer (TC 3.A.1.10) family. In terms of assembly, the complex is composed of two ATP-binding proteins (FbpC), two transmembrane proteins (FbpB) and a solute-binding protein (FbpA).

It is found in the cell inner membrane. The catalysed reaction is Fe(3+)(out) + ATP + H2O = Fe(3+)(in) + ADP + phosphate + H(+). Part of the ABC transporter complex FbpABC involved in Fe(3+) ions import. Responsible for energy coupling to the transport system. The chain is Fe(3+) ions import ATP-binding protein FbpC from Brucella abortus (strain 2308).